The following is a 143-amino-acid chain: DEQEGCASGWVPFDGRCFGFFPQELSWRRAEGFCQRLGARTHLASIHSEEEHQAIMSMLASSQPYSESEEEVADEEVWIGLHRPMGRRHWEWSDGTKMDYSSWYREGFPRRRACAALEDSTDFASWDTELCSDRKPFICEYHV.

Disulfide bonds link cysteine 6-cysteine 17, cysteine 34-cysteine 139, and cysteine 114-cysteine 131. Residues 13 to 140 (FDGRCFGFFP…CSDRKPFICE (128 aa)) form the C-type lectin domain. 2 positions are modified to phosphoserine: serine 66 and serine 68.

The protein resides in the secreted. It localises to the extracellular space. It is found in the extracellular matrix. This chain is Rheacalcin-2, found in Rhea americana (Greater rhea).